Consider the following 356-residue polypeptide: tRNA pseudouridine synthase D (356 aa).

Aspartate 84 (nucleophile) is an active-site residue. Positions 159-302 (GVPNYYGPQR…RRGARRPIRV (144 aa)) constitute a TRUD domain.

Belongs to the pseudouridine synthase TruD family.

It carries out the reaction uridine(13) in tRNA = pseudouridine(13) in tRNA. Responsible for synthesis of pseudouridine from uracil-13 in transfer RNAs. This is tRNA pseudouridine synthase D from Thermus thermophilus (strain ATCC 27634 / DSM 579 / HB8).